Reading from the N-terminus, the 562-residue chain is Membrane protein insertase YidC (562 aa).

The helical transmembrane segment at 4 to 24 (QRIFLFLALSILGLLLWTSWE) threads the bilayer. Residues 33 to 71 (TEEVVEAEDDVPAPAETPDEAPDPADGETPARDRAEVED) form a disordered region. Residues 35-58 (EVVEAEDDVPAPAETPDEAPDPAD) show a composition bias toward acidic residues. A compositionally biased stretch (basic and acidic residues) spans 61-71 (TPARDRAEVED). 4 helical membrane-spanning segments follow: residues 330–350 (MTLS…FWLL), 356–376 (IVGN…LAFY), 426–446 (LGGC…YWVL), and 499–519 (IMMA…AGLV).

This sequence belongs to the OXA1/ALB3/YidC family. Type 1 subfamily. In terms of assembly, interacts with the Sec translocase complex via SecD. Specifically interacts with transmembrane segments of nascent integral membrane proteins during membrane integration.

Its subcellular location is the cell inner membrane. Functionally, required for the insertion and/or proper folding and/or complex formation of integral membrane proteins into the membrane. Involved in integration of membrane proteins that insert both dependently and independently of the Sec translocase complex, as well as at least some lipoproteins. Aids folding of multispanning membrane proteins. The chain is Membrane protein insertase YidC from Alkalilimnicola ehrlichii (strain ATCC BAA-1101 / DSM 17681 / MLHE-1).